We begin with the raw amino-acid sequence, 227 residues long: Phosphoribosylformylglycinamidine synthase subunit PurQ (227 aa).

The Glutamine amidotransferase type-1 domain maps to 3–225 (FAVIVLPGSN…VKNWRDTHVT (223 aa)). C86 (nucleophile) is an active-site residue. Active-site residues include H194 and E196.

As to quaternary structure, part of the FGAM synthase complex composed of 1 PurL, 1 PurQ and 2 PurS subunits.

The protein localises to the cytoplasm. It catalyses the reaction N(2)-formyl-N(1)-(5-phospho-beta-D-ribosyl)glycinamide + L-glutamine + ATP + H2O = 2-formamido-N(1)-(5-O-phospho-beta-D-ribosyl)acetamidine + L-glutamate + ADP + phosphate + H(+). The catalysed reaction is L-glutamine + H2O = L-glutamate + NH4(+). The protein operates within purine metabolism; IMP biosynthesis via de novo pathway; 5-amino-1-(5-phospho-D-ribosyl)imidazole from N(2)-formyl-N(1)-(5-phospho-D-ribosyl)glycinamide: step 1/2. Functionally, part of the phosphoribosylformylglycinamidine synthase complex involved in the purines biosynthetic pathway. Catalyzes the ATP-dependent conversion of formylglycinamide ribonucleotide (FGAR) and glutamine to yield formylglycinamidine ribonucleotide (FGAM) and glutamate. The FGAM synthase complex is composed of three subunits. PurQ produces an ammonia molecule by converting glutamine to glutamate. PurL transfers the ammonia molecule to FGAR to form FGAM in an ATP-dependent manner. PurS interacts with PurQ and PurL and is thought to assist in the transfer of the ammonia molecule from PurQ to PurL. The chain is Phosphoribosylformylglycinamidine synthase subunit PurQ from Bacillus pumilus (strain SAFR-032).